A 580-amino-acid chain; its full sequence is Benzoate--CoA ligase, peroxisomal (580 aa).

A Microbody targeting signal motif is present at residues 578-580 (SRL).

This sequence belongs to the ATP-dependent AMP-binding enzyme family.

It localises to the peroxisome. It catalyses the reaction benzoate + ATP + CoA = benzoyl-CoA + AMP + diphosphate. Its function is as follows. Benzoate--CoA ligase involved in benzoyloxyglucosinolate biosynthesis in seeds. Glucosinolates are secondary metabolites involved in pathogen and insect defense of cruciferous plants. The sequence is that of Benzoate--CoA ligase, peroxisomal (AAE20) from Arabidopsis thaliana (Mouse-ear cress).